Reading from the N-terminus, the 248-residue chain is MSFVVIIPARFSSTRLPGKPLVDINGKPMIVHVLERARESGAERIIVATDHEDVARAVEAAGGEVCMTRADHQSGTERLAEVVEKCGFSDDTVIVNVQGDEPMIPAVIIRQVAENLAQRQVGMATLAVPIHSAEEAFNPNAVKVVLDAEGYALYFSRATIPWDRDRFAKSLETVGDTCLRHLGIYGYRAGFIRRYVSWQPSQLEHIEMLEQLRVLWYGEKIHVAVAKAVPGTGVDTADDLERVRAEMR.

Belongs to the KdsB family.

Its subcellular location is the cytoplasm. The enzyme catalyses 3-deoxy-alpha-D-manno-oct-2-ulosonate + CTP = CMP-3-deoxy-beta-D-manno-octulosonate + diphosphate. Its pathway is nucleotide-sugar biosynthesis; CMP-3-deoxy-D-manno-octulosonate biosynthesis; CMP-3-deoxy-D-manno-octulosonate from 3-deoxy-D-manno-octulosonate and CTP: step 1/1. It participates in bacterial outer membrane biogenesis; lipopolysaccharide biosynthesis. Functionally, activates KDO (a required 8-carbon sugar) for incorporation into bacterial lipopolysaccharide in Gram-negative bacteria. This chain is 3-deoxy-manno-octulosonate cytidylyltransferase, found in Salmonella enteritidis PT4 (strain P125109).